The primary structure comprises 316 residues: N-acetyl-gamma-glutamyl-phosphate reductase (316 aa).

Cys-136 is an active-site residue.

It belongs to the NAGSA dehydrogenase family. Type 1 subfamily.

It is found in the cytoplasm. The enzyme catalyses N-acetyl-L-glutamate 5-semialdehyde + phosphate + NADP(+) = N-acetyl-L-glutamyl 5-phosphate + NADPH + H(+). It participates in amino-acid biosynthesis; L-arginine biosynthesis; N(2)-acetyl-L-ornithine from L-glutamate: step 3/4. Its function is as follows. Catalyzes the NADPH-dependent reduction of N-acetyl-5-glutamyl phosphate to yield N-acetyl-L-glutamate 5-semialdehyde. The sequence is that of N-acetyl-gamma-glutamyl-phosphate reductase from Xanthomonas campestris pv. campestris (strain 8004).